Reading from the N-terminus, the 272-residue chain is Formamidopyrimidine-DNA glycosylase (272 aa).

The active-site Schiff-base intermediate with DNA is the proline 2. Glutamate 3 functions as the Proton donor in the catalytic mechanism. Lysine 56 acts as the Proton donor; for beta-elimination activity in catalysis. Positions 89, 108, and 149 each coordinate DNA. The FPG-type zinc-finger motif lies at 234–268 (LAYGRAGEMCVNCETPLENLKLGQRASVFCPQCQP). Arginine 258 (proton donor; for delta-elimination activity) is an active-site residue.

The protein belongs to the FPG family. In terms of assembly, monomer. The cofactor is Zn(2+).

The enzyme catalyses Hydrolysis of DNA containing ring-opened 7-methylguanine residues, releasing 2,6-diamino-4-hydroxy-5-(N-methyl)formamidopyrimidine.. It catalyses the reaction 2'-deoxyribonucleotide-(2'-deoxyribose 5'-phosphate)-2'-deoxyribonucleotide-DNA = a 3'-end 2'-deoxyribonucleotide-(2,3-dehydro-2,3-deoxyribose 5'-phosphate)-DNA + a 5'-end 5'-phospho-2'-deoxyribonucleoside-DNA + H(+). Its function is as follows. Involved in base excision repair of DNA damaged by oxidation or by mutagenic agents. Acts as a DNA glycosylase that recognizes and removes damaged bases. Has a preference for oxidized purines, such as 7,8-dihydro-8-oxoguanine (8-oxoG). Has AP (apurinic/apyrimidinic) lyase activity and introduces nicks in the DNA strand. Cleaves the DNA backbone by beta-delta elimination to generate a single-strand break at the site of the removed base with both 3'- and 5'-phosphates. The polypeptide is Formamidopyrimidine-DNA glycosylase (Acinetobacter baylyi (strain ATCC 33305 / BD413 / ADP1)).